Here is a 376-residue protein sequence, read N- to C-terminus: Deoxyuridine 5'-triphosphate nucleotidohydrolase (376 aa).

It belongs to the dUTPase family. It depends on Mg(2+) as a cofactor.

The enzyme catalyses dUTP + H2O = dUMP + diphosphate + H(+). Its function is as follows. Involved in nucleotide metabolism: produces dUMP, the immediate precursor of thymidine nucleotides and decreases the intracellular concentration of dUTP to avoid uracil incorporation into viral DNA. This Human herpesvirus 6B (strain Z29) (HHV-6 variant B) protein is Deoxyuridine 5'-triphosphate nucleotidohydrolase.